We begin with the raw amino-acid sequence, 419 residues long: Carboxypeptidase A1 (419 aa).

The signal sequence occupies residues 1-16; the sequence is MQGLLILSVLLGAALG. A propeptide spans 17-110 (activation peptide); it reads KEDFVGHQVL…QEQMFASQSR (94 aa). The Peptidase M14 domain occupies 121 to 414; that stretch reads TYHTLDEIYD…LGVLTIMEHT (294 aa). His179 and Glu182 together coordinate Zn(2+). Substrate is bound by residues 179–182, Arg237, and 254–255; these read HSRE and NR. Cys248 and Cys271 are oxidised to a cystine. His306 lines the Zn(2+) pocket. Substrate is bound by residues 307-308 and Tyr358; that span reads SY. The active-site Proton donor/acceptor is the Glu380.

Belongs to the peptidase M14 family. As to quaternary structure, monomer. May form a complex with proelastase 2. It depends on Zn(2+) as a cofactor. Pancreas.

It localises to the secreted. The enzyme catalyses Release of a C-terminal amino acid, but little or no action with -Asp, -Glu, -Arg, -Lys or -Pro.. The catalysed reaction is leukotriene C4 + H2O = leukotriene F4 + glycine. With respect to regulation, inhibited by interaction with the S.magnifica carboxypeptidase inhibitor SmCI. Functionally, carboxypeptidase that catalyzes the release of a C-terminal amino acid, but has little or no action with -Asp, -Glu, -Arg, -Lys or -Pro. Catalyzes the conversion of leukotriene C4 to leukotriene F4 via the hydrolysis of an amide bond. This Bos taurus (Bovine) protein is Carboxypeptidase A1 (CPA1).